The following is a 232-amino-acid chain: A-type ATP synthase subunit D (232 aa).

Belongs to the V-ATPase D subunit family. Has multiple subunits with at least A(3), B(3), C, D, E, F, H, I and proteolipid K(x).

It localises to the cell membrane. Its function is as follows. Component of the A-type ATP synthase that produces ATP from ADP in the presence of a proton gradient across the membrane. In Methanopyrus kandleri (strain AV19 / DSM 6324 / JCM 9639 / NBRC 100938), this protein is A-type ATP synthase subunit D.